Here is a 307-residue protein sequence, read N- to C-terminus: Serine/threonine-protein phosphatase 4 catalytic subunit (307 aa).

Position 2 is an N-acetylalanine (alanine 2). Residues aspartate 54, histidine 56, aspartate 82, and asparagine 114 each contribute to the Mn(2+) site. Residue histidine 115 is the Proton donor of the active site. Mn(2+) contacts are provided by histidine 164 and histidine 238. Leucine 307 carries the post-translational modification Leucine methyl ester.

Belongs to the PPP phosphatase family. PP-4 (PP-X) subfamily. Serine/threonine-protein phosphatase 4 (PP4) occurs in different assemblies of the catalytic and one or more regulatory subunits. Component of the PP4 complexes PPP4C-PPP4R1, PPP4C-PPP4R2, PPP4C-PPP4R2-PPP4R3A, PPP4C-PPP4R2-PPP4R3B and PPP4C-PPP4R4. The PPP4C-PPP4R2 complex appears to be a tetramer composed of 2 molecules of PPP4C and 2 molecules of PPP4R2. Interacts with REL, NFKB1/p50 and RELA. Interacts with SMN1 and GEMIN4. Interacts with IRS4 (phosphorylated). Interacts with SMEK1/PPP4R3A; the interaction requires PP4R2. Interacts with HDAC3. Mn(2+) is required as a cofactor. Post-translationally, methylation at the C-terminal Leu-307 is critical for interactions with regulatory subunits and functions in DNA repair.

It is found in the cytoplasm. The protein localises to the nucleus. Its subcellular location is the cytoskeleton. The protein resides in the microtubule organizing center. It localises to the centrosome. It carries out the reaction O-phospho-L-seryl-[protein] + H2O = L-seryl-[protein] + phosphate. It catalyses the reaction O-phospho-L-threonyl-[protein] + H2O = L-threonyl-[protein] + phosphate. Protein phosphatase that is involved in many processes such as microtubule organization at centrosomes, maturation of spliceosomal snRNPs, apoptosis, DNA repair, tumor necrosis factor (TNF)-alpha signaling, activation of c-Jun N-terminal kinase MAPK8, regulation of histone acetylation, DNA damage checkpoint signaling, NF-kappa-B activation and cell migration. The PPP4C-PPP4R1 PP4 complex may play a role in dephosphorylation and regulation of HDAC3. The PPP4C-PPP4R2-PPP4R3A PP4 complex specifically dephosphorylates H2AX phosphorylated on Ser-140 (gamma-H2AX) generated during DNA replication and required for DNA DSB repair. Dephosphorylates NDEL1 at CDK1 phosphorylation sites and negatively regulates CDK1 activity in interphase. In response to DNA damage, catalyzes RPA2 dephosphorylation, an essential step for DNA repair since it allows the efficient RPA2-mediated recruitment of RAD51 to chromatin. This chain is Serine/threonine-protein phosphatase 4 catalytic subunit (Ppp4c), found in Rattus norvegicus (Rat).